A 142-amino-acid polypeptide reads, in one-letter code: Hemoglobin subunit alpha (142 aa).

The Globin domain maps to 2-142 (VLSAADKSNV…VGTVLTSKYR (141 aa)). Ser-4 is subject to Phosphoserine. N6-succinyllysine is present on residues Lys-8 and Lys-12. Position 17 is an N6-acetyllysine; alternate (Lys-17). N6-succinyllysine; alternate is present on Lys-17. A Phosphotyrosine modification is found at Tyr-25. Ser-36 bears the Phosphoserine mark. Residue Lys-41 is modified to N6-succinyllysine. Ser-50 bears the Phosphoserine mark. His-59 is a binding site for O2. A heme b-binding site is contributed by His-88. Phosphoserine is present on Ser-103. Thr-109 bears the Phosphothreonine mark. 2 positions are modified to phosphoserine: Ser-125 and Ser-132. Thr-135 and Thr-138 each carry phosphothreonine. Position 139 is a phosphoserine (Ser-139).

The protein belongs to the globin family. Heterotetramer of two alpha chains and two beta chains. In terms of tissue distribution, red blood cells.

Involved in oxygen transport from the lung to the various peripheral tissues. Functionally, hemopressin acts as an antagonist peptide of the cannabinoid receptor CNR1. Hemopressin-binding efficiently blocks cannabinoid receptor CNR1 and subsequent signaling. In Pantholops hodgsonii (Chiru), this protein is Hemoglobin subunit alpha (HBA).